A 154-amino-acid polypeptide reads, in one-letter code: Leghemoglobin-1 (154 aa).

Residues 3–151 (VLTDVQVALV…LAIIIKKEMK (149 aa)) form the Globin domain. Ser46 is a binding site for heme b. Ser46 is modified (phosphoserine). Position 64 (His64) interacts with O2. 3 residues coordinate heme b: Lys67, His98, and Lys101. A Nitrated tyrosine modification is found at Tyr139.

The protein belongs to the plant globin family. In terms of assembly, monomer. Post-translationally, nitrated in effective nodules and particularly in hypoxic conditions; this mechanism may play a protective role in the symbiosis by buffering toxic peroxynitrite NO(2)(-). Nitration level decrease during nodule senescence. Phosphorylation at Ser-46 disrupts the molecular environment of its porphyrin ring oxygen binding pocket, thus leading to a reduced oxygen consumption and to the delivery of oxygen O(2) to symbiosomes. Accumulates in developing root nodules and present in roots, especially in the upper part. Detected in leaves at low levels.

The protein localises to the cytoplasm. The protein resides in the cytosol. Its subcellular location is the nucleus. Functionally, leghemoglobin that reversibly binds oxygen O(2) through a pentacoordinated heme iron. In root nodules, facilitates the diffusion of oxygen to the bacteroids while preventing the bacterial nitrogenase from being inactivated by buffering dioxygen, nitric oxide and carbon monoxide, and promoting the formation of reactive oxygen species (ROS, e.g. H(2)O(2)). This role is essential for symbiotic nitrogen fixation (SNF). The protein is Leghemoglobin-1 of Lupinus luteus (European yellow lupine).